The primary structure comprises 385 residues: Succinate--CoA ligase [ADP-forming] subunit beta (385 aa).

The region spanning 9 to 244 is the ATP-grasp domain; it reads KEVLRKYGVS…LDEEDPKEIE (236 aa). ATP-binding positions include K46, 53-55, E99, C102, and E107; that span reads GRG. Mg(2+) contacts are provided by N199 and D213. S220 bears the Phosphoserine mark. Substrate is bound by residues N264 and 321 to 323; that span reads GIM.

It belongs to the succinate/malate CoA ligase beta subunit family. As to quaternary structure, heterotetramer of two alpha and two beta subunits. Interacts with BrxC. It depends on Mg(2+) as a cofactor.

The enzyme catalyses succinate + ATP + CoA = succinyl-CoA + ADP + phosphate. It carries out the reaction GTP + succinate + CoA = succinyl-CoA + GDP + phosphate. It participates in carbohydrate metabolism; tricarboxylic acid cycle; succinate from succinyl-CoA (ligase route): step 1/1. Its function is as follows. Succinyl-CoA synthetase functions in the citric acid cycle (TCA), coupling the hydrolysis of succinyl-CoA to the synthesis of either ATP or GTP and thus represents the only step of substrate-level phosphorylation in the TCA. The beta subunit provides nucleotide specificity of the enzyme and binds the substrate succinate, while the binding sites for coenzyme A and phosphate are found in the alpha subunit. The chain is Succinate--CoA ligase [ADP-forming] subunit beta from Bacillus subtilis (strain 168).